A 395-amino-acid chain; its full sequence is MQLEPAHLVYAAFWTFGLVNNVLYVVILTAAVDLVGPQTPKAVVLLADVLPSFLIKLAAPFFIHKIPYNRRITLLVGLSTVGMMSVSLASPLFLKLVGVVLASFSSGLGEVTFLQLTHFYDTRALNGWSSGTGGAGLVGSGLFMLLTTVLGVSVKTSLLVFAFFPLAFLGVYFYLLPPRDYNRVPGAFPVHSNDPETGIETQPITWEFVASGYETTMVRLKPLVMPYMLPLFLVYFSEYTINQGVAPTLLFPMEELPFSKFRDVYVTYGTLYQLGVFISRSSAPFVRIRRIMIPSVLQFANLVFCIAQSMSPILPNVWLVFILIFYEGLLGGAAYVNTFLLITEQADLAEREFALGSVGMSDSAGIVLAGLVSLWLEPGLCNYQVNDGRGWCTLE.

An N-terminal signal peptide occupies residues 1 to 31; that stretch reads MQLEPAHLVYAAFWTFGLVNNVLYVVILTAA. Transmembrane regions (helical) follow at residues 43-63, 74-94, 96-116, 134-154, 158-178, 222-242, 261-278, 291-311, 313-333, and 355-375; these read VVLL…PFFI, LLVG…PLFL, LVGV…FLQL, GAGL…GVSV, LLVF…LLPP, PLVM…YTIN, FRDV…GVFI, IMIP…QSMS, ILPN…LGGA, and LGSV…VSLW.

The protein belongs to the battenin family.

The protein localises to the vacuole membrane. In terms of biological role, involved in vacuolar transport and vacuole pH homeostasis. Also required for cytokinesis. The chain is Protein BTN1 (BTN1) from Yarrowia lipolytica (strain CLIB 122 / E 150) (Yeast).